The primary structure comprises 473 residues: MNAAVIDSKHSQDFIVADLSLADWGRKELDIAETEMPGLVQIREEYKAQQPLKGARVAGSLHMTIQTGVLIETLKALGADVRWASCNIFSTQDHAAAAIAKGGTPVFAFKGESLDEYWEFSHRIFEWPNGEFANMILDDGGDATLLLILGSKAEKDRSVISKPTNEEEVALYKSIARHLDADPVWYSTRLAHIKGVTEETTTGVHRLYQMEKEGRLPFPAINVNDSVTKSKFDNLYGCRESLVDGIKRATDVMIAGKIAVVAGYGDVGKGCAQSLRGLGATVWVTEIDPICALQAAMEGYRVVTMEYAADKADIFVTATGNYHVIGHDHMKAMRHNAIVCNIGHFDSEIDVASTRQYTWENIKPQVDHIIFPDGKRVILLAEGRLVNLGCATGHPSFVMSNSFTNQTLAQIELFVEGSKYENKVYVLPKQLDEKVARLHLARIGANLTELTSEQAGYIGVDKNGPFKPNHYRY.

The substrate site is built by Thr-64, Asp-139, and Glu-199. Residue 200-202 (TTT) participates in NAD(+) binding. The substrate site is built by Lys-229 and Asp-233. NAD(+) contacts are provided by residues Asn-234, 263–268 (GYGDVG), Glu-286, Asn-321, 342–344 (IGH), and Asn-387.

The protein belongs to the adenosylhomocysteinase family. NAD(+) serves as cofactor.

It localises to the cytoplasm. It carries out the reaction S-adenosyl-L-homocysteine + H2O = L-homocysteine + adenosine. The protein operates within amino-acid biosynthesis; L-homocysteine biosynthesis; L-homocysteine from S-adenosyl-L-homocysteine: step 1/1. May play a key role in the regulation of the intracellular concentration of adenosylhomocysteine. This Paraburkholderia phymatum (strain DSM 17167 / CIP 108236 / LMG 21445 / STM815) (Burkholderia phymatum) protein is Adenosylhomocysteinase.